We begin with the raw amino-acid sequence, 636 residues long: Threonine--tRNA ligase (636 aa).

In terms of domain architecture, TGS spans 1–61 (MPVITLPDGS…TQDVSLSIIT (61 aa)). Residues 242–533 (DHRKLGKKFD…LIEEYEGAFP (292 aa)) form a catalytic region. 3 residues coordinate Zn(2+): cysteine 333, histidine 384, and histidine 510.

The protein belongs to the class-II aminoacyl-tRNA synthetase family. As to quaternary structure, homodimer. The cofactor is Zn(2+).

It is found in the cytoplasm. The catalysed reaction is tRNA(Thr) + L-threonine + ATP = L-threonyl-tRNA(Thr) + AMP + diphosphate + H(+). Its function is as follows. Catalyzes the attachment of threonine to tRNA(Thr) in a two-step reaction: L-threonine is first activated by ATP to form Thr-AMP and then transferred to the acceptor end of tRNA(Thr). Also edits incorrectly charged L-seryl-tRNA(Thr). The chain is Threonine--tRNA ligase from Saccharophagus degradans (strain 2-40 / ATCC 43961 / DSM 17024).